The chain runs to 136 residues: Glutamyl-tRNA(Gln) amidotransferase subunit C, mitochondrial (136 aa).

It belongs to the GatC family. As to quaternary structure, subunit of the heterotrimeric GatCAB amidotransferase (AdT) complex, composed of A (QRSL1), B (GATB) and C (GATC) subunits.

The protein localises to the mitochondrion. The catalysed reaction is L-glutamyl-tRNA(Gln) + L-glutamine + ATP + H2O = L-glutaminyl-tRNA(Gln) + L-glutamate + ADP + phosphate + H(+). In terms of biological role, allows the formation of correctly charged Gln-tRNA(Gln) through the transamidation of misacylated Glu-tRNA(Gln) in the mitochondria. The reaction takes place in the presence of glutamine and ATP through an activated gamma-phospho-Glu-tRNA(Gln). This Homo sapiens (Human) protein is Glutamyl-tRNA(Gln) amidotransferase subunit C, mitochondrial.